Consider the following 527-residue polypeptide: Peptidoglycan O-acetyltransferase (527 aa).

A run of 11 helical transmembrane segments spans residues 11-31 (VFVL…VGFL), 55-75 (LFFY…SIVF), 96-116 (LILG…TDFF), 131-151 (LHLI…AYLM), 187-207 (HFLD…GPIV), 228-248 (NIAL…VIAD), 280-300 (LYFD…FFNI), 352-372 (LILV…FIIW), 397-417 (MPKI…WVFF), 463-483 (IMYA…SFCL), and 505-525 (LLLS…FLYF). Residue histidine 363 is part of the active site.

It belongs to the membrane-bound acyltransferase family.

The protein localises to the cell membrane. Catalyzes the O-acetylation of peptidoglycan (PG), an important mechanism that appears to confer lysozyme resistance and contributes to pathogen persistence in the host. The protein is Peptidoglycan O-acetyltransferase (patA) of Helicobacter pylori (strain ATCC 700392 / 26695) (Campylobacter pylori).